We begin with the raw amino-acid sequence, 325 residues long: UDP-N-acetylenolpyruvoylglucosamine reductase (325 aa).

The FAD-binding PCMH-type domain occupies 40–221 (RTGGLAELFY…RAAMDEVALH (182 aa)). The active site involves arginine 186. Serine 235 (proton donor) is an active-site residue. Residue glutamate 305 is part of the active site.

Belongs to the MurB family. It depends on FAD as a cofactor.

Its subcellular location is the cytoplasm. It catalyses the reaction UDP-N-acetyl-alpha-D-muramate + NADP(+) = UDP-N-acetyl-3-O-(1-carboxyvinyl)-alpha-D-glucosamine + NADPH + H(+). Its pathway is cell wall biogenesis; peptidoglycan biosynthesis. Its function is as follows. Cell wall formation. In Bartonella henselae (strain ATCC 49882 / DSM 28221 / CCUG 30454 / Houston 1) (Rochalimaea henselae), this protein is UDP-N-acetylenolpyruvoylglucosamine reductase.